Reading from the N-terminus, the 201-residue chain is Large ribosomal subunit protein uL4 (201 aa).

Residues 45-67 (AQKTRAEVTGSGKKPWRQKGTGR) are disordered.

It belongs to the universal ribosomal protein uL4 family. Part of the 50S ribosomal subunit.

One of the primary rRNA binding proteins, this protein initially binds near the 5'-end of the 23S rRNA. It is important during the early stages of 50S assembly. It makes multiple contacts with different domains of the 23S rRNA in the assembled 50S subunit and ribosome. Functionally, forms part of the polypeptide exit tunnel. The polypeptide is Large ribosomal subunit protein uL4 (Yersinia enterocolitica serotype O:8 / biotype 1B (strain NCTC 13174 / 8081)).